Reading from the N-terminus, the 338-residue chain is Phenylalanine--tRNA ligase alpha subunit (338 aa).

E253 contributes to the Mg(2+) binding site.

This sequence belongs to the class-II aminoacyl-tRNA synthetase family. Phe-tRNA synthetase alpha subunit type 1 subfamily. Tetramer of two alpha and two beta subunits. Mg(2+) is required as a cofactor.

It is found in the cytoplasm. The catalysed reaction is tRNA(Phe) + L-phenylalanine + ATP = L-phenylalanyl-tRNA(Phe) + AMP + diphosphate + H(+). In Legionella pneumophila (strain Lens), this protein is Phenylalanine--tRNA ligase alpha subunit.